Reading from the N-terminus, the 486-residue chain is Serine/threonine-protein kinase 4 (486 aa).

Residues 29-280 (FDVLEKLGEG…AIQLLQHPFV (252 aa)) form the Protein kinase domain. Residues 35-43 (LGEGSYGSV) and lysine 58 each bind ATP. Aspartate 148 functions as the Proton acceptor in the catalytic mechanism. At threonine 182 the chain carries Phosphothreonine; by autocatalysis. The stretch at 288–324 (ILRDLINEAMDIKLKRQEAQQRELDQEDEENSEEDET) forms a coiled coil. Positions 305–332 (EAQQRELDQEDEENSEEDETDSGTMVRA) are disordered. A compositionally biased stretch (acidic residues) spans 312–325 (DQEDEENSEEDETD). One can recognise an SARAH domain in the interval 432–479 (YEFLKTWSVDELQRRLSALDPMMEQEIEEIRQKYQSKRQPILDAIEAK).

This sequence belongs to the protein kinase superfamily. STE Ser/Thr protein kinase family. STE20 subfamily. Homodimer; mediated via the coiled-coil region. Mg(2+) serves as cofactor. In terms of processing, proteolytically cleaved by caspase-3 during apoptosis at Asp-325 resulting in a 37 kDa form. Proteolytic cleavage results in kinase activation and nuclear translocation of the truncated form (MST1/N).

The protein resides in the cytoplasm. The protein localises to the nucleus. The enzyme catalyses L-seryl-[protein] + ATP = O-phospho-L-seryl-[protein] + ADP + H(+). It carries out the reaction L-threonyl-[protein] + ATP = O-phospho-L-threonyl-[protein] + ADP + H(+). With respect to regulation, the C-terminal non-catalytic region inhibits the kinase activity, the enzyme is activated by caspase-cleavage. Homodimerization and autophosphorylation of Thr-182 is also required for full activation. Functionally, stress-activated, pro-apoptotic kinase which, following caspase-cleavage, enters the nucleus and induces chromatin condensation followed by internucleosomal DNA fragmentation. Key component of the Hippo signaling pathway which plays a pivotal role in organ size control and tumor suppression by restricting proliferation and promoting apoptosis. The core of this pathway is composed of a kinase cascade wherein STK3/MST2 and STK4/MST1, in complex with its regulatory protein SAV1, phosphorylates and activates LATS1/2 in complex with its regulatory protein MOB1, which in turn phosphorylates and inactivates YAP1 oncoprotein and WWTR1/TAZ. Phosphorylation of YAP1 by LATS2 inhibits its translocation into the nucleus to regulate cellular genes important for cell proliferation, cell death, and cell migration. Phosphorylates 'Ser-14' of histone H2B (H2BS14ph) during apoptosis. Phosphorylates FOXO3 upon oxidative stress, which results in its nuclear translocation and cell death initiation. The polypeptide is Serine/threonine-protein kinase 4 (STK4) (Gallus gallus (Chicken)).